Here is a 511-residue protein sequence, read N- to C-terminus: Dihydrolipoyl dehydrogenase, mitochondrial (511 aa).

Residues 75–84 (EKRGTLGGTC), K93, G157, and 187–189 (TGS) each bind FAD. C84 and C89 are joined by a disulfide. Residues 224-231 (GGGIIGLE), E247, L281, and G316 contribute to the NAD(+) site. FAD contacts are provided by residues D357 and 363–366 (MLAH). The active-site Proton acceptor is the H489.

The protein belongs to the class-I pyridine nucleotide-disulfide oxidoreductase family. As to quaternary structure, homodimer. FAD serves as cofactor.

The protein resides in the mitochondrion matrix. The enzyme catalyses N(6)-[(R)-dihydrolipoyl]-L-lysyl-[protein] + NAD(+) = N(6)-[(R)-lipoyl]-L-lysyl-[protein] + NADH + H(+). Functionally, lipoamide dehydrogenase is a component of the alpha-ketoacid dehydrogenase complexes. Malfunction of this protein blocks the progression of cell cycle from G1 to S phase. The protein is Dihydrolipoyl dehydrogenase, mitochondrial (dld1) of Schizosaccharomyces pombe (strain 972 / ATCC 24843) (Fission yeast).